A 78-amino-acid chain; its full sequence is Conotoxin Bu2 (78 aa).

Positions 1–19 (MKLTCVLIIAVLFLTAITA) are cleaved as a signal peptide. Residues 20–41 (DDSRDKQVYRAVGLIDKMRRIR) constitute a propeptide that is removed on maturation. Cystine bridges form between Cys46/Cys59, Cys53/Cys64, and Cys58/Cys73.

Belongs to the conotoxin O1 superfamily. In terms of tissue distribution, expressed by the venom duct.

Its subcellular location is the secreted. This chain is Conotoxin Bu2, found in Conus bullatus (Bubble cone).